We begin with the raw amino-acid sequence, 331 residues long: Glyceraldehyde-3-phosphate dehydrogenase, cytosolic (331 aa).

Residues 11–12 (RI), Asp-33, and Arg-77 each bind NAD(+). Residues 148 to 150 (SCT), Thr-179, 208 to 209 (TG), and Arg-231 each bind D-glyceraldehyde 3-phosphate. Cys-149 acts as the Nucleophile in catalysis. Asn-313 is an NAD(+) binding site.

Belongs to the glyceraldehyde-3-phosphate dehydrogenase family. In terms of assembly, homotetramer.

It localises to the cytoplasm. The catalysed reaction is D-glyceraldehyde 3-phosphate + phosphate + NAD(+) = (2R)-3-phospho-glyceroyl phosphate + NADH + H(+). Its pathway is carbohydrate degradation; glycolysis; pyruvate from D-glyceraldehyde 3-phosphate: step 1/5. This chain is Glyceraldehyde-3-phosphate dehydrogenase, cytosolic (GAPC), found in Leishmania mexicana.